Here is a 161-residue protein sequence, read N- to C-terminus: Nucleotide-binding protein Rpic_2826 (161 aa).

This sequence belongs to the YajQ family.

In terms of biological role, nucleotide-binding protein. The polypeptide is Nucleotide-binding protein Rpic_2826 (Ralstonia pickettii (strain 12J)).